Consider the following 269-residue polypeptide: Shikimate dehydrogenase (NADP(+)) (269 aa).

Residues 19–21 and Thr-66 contribute to the shikimate site; that span reads SLS. The active-site Proton acceptor is the Lys-70. Asp-82 is an NADP(+) binding site. Asn-91 and Asp-106 together coordinate shikimate. NADP(+) contacts are provided by residues 130–134, 153–158, and Ile-214; these read GAGGA and NRTKEK. Tyr-216 contacts shikimate. Gly-235 serves as a coordination point for NADP(+). Residue Gln-242 participates in shikimate binding.

It belongs to the shikimate dehydrogenase family. Homodimer.

The catalysed reaction is shikimate + NADP(+) = 3-dehydroshikimate + NADPH + H(+). The protein operates within metabolic intermediate biosynthesis; chorismate biosynthesis; chorismate from D-erythrose 4-phosphate and phosphoenolpyruvate: step 4/7. Functionally, involved in the biosynthesis of the chorismate, which leads to the biosynthesis of aromatic amino acids. Catalyzes the reversible NADPH linked reduction of 3-dehydroshikimate (DHSA) to yield shikimate (SA). The protein is Shikimate dehydrogenase (NADP(+)) of Aquifex aeolicus (strain VF5).